A 487-amino-acid polypeptide reads, in one-letter code: Mu-like prophage FluMu tail sheath protein (487 aa).

This sequence belongs to the myoviridae tail sheath protein family.

Functionally, major component of the tail. The sequence is that of Mu-like prophage FluMu tail sheath protein from Haemophilus influenzae (strain ATCC 51907 / DSM 11121 / KW20 / Rd).